Consider the following 637-residue polypeptide: Poly(U)-binding-splicing factor hfp (637 aa).

Basic and acidic residues-rich tracts occupy residues M1 to S20 and T28 to D37. The interval M1–P41 is disordered. Phosphoserine occurs at positions 13 and 30. RRM domains lie at C130–N208 and N227–T305. Residues R537–Q627 enclose the RRM 3; atypical domain.

The protein belongs to the RRM half pint family. In terms of assembly, interacts with enc. However, given the cytoplasmic localization of enc, the relevance of such interaction is unclear. Expressed in all germline cells and within the follicle cell.

The protein localises to the nucleus. Its function is as follows. Splicing factor that regulates oogenesis and controls both mitosis and mRNA localization in the germline by regulating mRNA splicing of a subset of genes within the ovary. Probably acts by regulating the alternative splice site selection of the otu transcript. Also regulates the alternative splicing of eIF4E1 and grk, while it is not involved in the splicing of par-1, sqd or psq. Involved in the alternative splicing of the bicistronic pre-mRNA encoding Kdm3 and CG8176; required for the efficient production of mRNA encoding Kdm3 and Kdm3-mediated regulation of rhino-dependent piRNA production. This chain is Poly(U)-binding-splicing factor hfp, found in Drosophila melanogaster (Fruit fly).